We begin with the raw amino-acid sequence, 150 residues long: Ribosomal RNA large subunit methyltransferase H (150 aa).

S-adenosyl-L-methionine-binding positions include A100 and 118–123 (LSEMTF).

Belongs to the RNA methyltransferase RlmH family. As to quaternary structure, homodimer.

Its subcellular location is the cytoplasm. The enzyme catalyses pseudouridine(1915) in 23S rRNA + S-adenosyl-L-methionine = N(3)-methylpseudouridine(1915) in 23S rRNA + S-adenosyl-L-homocysteine + H(+). In terms of biological role, specifically methylates the pseudouridine at position 1915 (m3Psi1915) in 23S rRNA. The chain is Ribosomal RNA large subunit methyltransferase H from Helicobacter pylori (strain HPAG1).